Here is a 439-residue protein sequence, read N- to C-terminus: Apolipoprotein N-acyltransferase (439 aa).

A run of 6 helical transmembrane segments spans residues 13–33 (LLAGILFYLSFSKLNLYFLVF), 47–67 (LFSFGFSAFFLSLLWIRIPLI), 75–95 (FIAYPALVLLVLFLSLYQFGL), 97–117 (YLLWRVFKFSFFAFPFLYTLV), 149–169 (NAGTVFLGSFVVLLISLFPLF), and 175–195 (IFSLAIITPLLIYGFIKETSY). The CN hydrolase domain maps to 207–439 (IQPFVPQDVK…GSRGILLFSF (233 aa)). Glutamate 248 acts as the Proton acceptor in catalysis. The active site involves lysine 305. The active-site Nucleophile is the cysteine 355.

This sequence belongs to the CN hydrolase family. Apolipoprotein N-acyltransferase subfamily.

Its subcellular location is the cell inner membrane. The enzyme catalyses N-terminal S-1,2-diacyl-sn-glyceryl-L-cysteinyl-[lipoprotein] + a glycerophospholipid = N-acyl-S-1,2-diacyl-sn-glyceryl-L-cysteinyl-[lipoprotein] + a 2-acyl-sn-glycero-3-phospholipid + H(+). The protein operates within protein modification; lipoprotein biosynthesis (N-acyl transfer). Its function is as follows. Catalyzes the phospholipid dependent N-acylation of the N-terminal cysteine of apolipoprotein, the last step in lipoprotein maturation. The protein is Apolipoprotein N-acyltransferase of Aquifex aeolicus (strain VF5).